Here is a 592-residue protein sequence, read N- to C-terminus: Probable auxin efflux carrier component 1c (592 aa).

At 1 to 6 (MITGAD) the chain is on the extracellular side. Residues 7–27 (FYHVMTAMVPLYVAMILAYGS) traverse the membrane as a helical segment. Residues 28 to 38 (VKWWRIFTPDQ) are Cytoplasmic-facing. Residues 39-59 (CSGINRFVALFAVPLLSFHFI) form a helical membrane-spanning segment. V51 contacts (indol-3-yl)acetate. The Extracellular portion of the chain corresponds to 60–70 (STNNPYTMNLR). The chain crosses the membrane as a helical span at residues 71–91 (FIAADTLQKLIVLALLTLWSH). Residues 92-100 (LSRRGSLEW) lie on the Cytoplasmic side of the membrane. The chain crosses the membrane as a helical span at residues 101 to 121 (TITLFSLSTLPNTLVMGIPLL). N112 and L114 together coordinate (indol-3-yl)acetate. At 122–131 (KGMYGEFSGS) the chain is on the extracellular side. Residues 132–152 (LMVQIVVLQCIIWYTLMLFMF) traverse the membrane as a helical segment. (indol-3-yl)acetate is bound at residue Y145. Residues 153 to 452 (EYRGARILIT…LIRNPNTYSS (300 aa)) lie on the Cytoplasmic side of the membrane. Disordered regions lie at residues 214–236 (RSDV…SNLT) and 282–331 (GATP…AKGE). Positions 224–236 (GFSSTTPRPSNLT) are enriched in polar residues. Residues 309–318 (APNPAMAAPP) show a composition bias toward pro residues. A helical transmembrane segment spans residues 453-473 (LIGLIWSLVCFRWNFEMPAII). Residues 474 to 476 (LKS) are Extracellular-facing. A helical membrane pass occupies residues 477–497 (ISILSDAGLGMAMFSLGLFMA). Over 498–511 (LQPRIIACGNKVAT) the chain is Cytoplasmic. A helical transmembrane segment spans residues 512–532 (FAMAVRFLTGPAVMAAASIAV). Residues 533–537 (GLRGT) are Extracellular-facing. The chain crosses the membrane as a helical span at residues 538 to 558 (LLHVAIVQAALPQGIVPFVFA). (indol-3-yl)acetate is bound by residues I552 and V553. The Cytoplasmic portion of the chain corresponds to 559–571 (KEYSVHPDILSTA). The chain crosses the membrane as a helical span at residues 572 to 592 (VIFGMLIALPITLVYYILLGL).

It belongs to the auxin efflux carrier (TC 2.A.69.1) family. Homodimer. In terms of tissue distribution, expressed at low levels in roots and leaves. Expressed in roots, stem bases, stems, leaves and young panicles.

The protein resides in the membrane. May act as a component of the auxin efflux carrier. This Oryza sativa subsp. japonica (Rice) protein is Probable auxin efflux carrier component 1c.